The primary structure comprises 491 residues: Glutamate--tRNA ligase (491 aa).

The 'HIGH' region signature appears at 14–24; that stretch reads PSPTGSPHVGL. The Zn(2+) site is built by C111, C113, C136, and D138. The short motif at 257–261 is the 'KMSKS' region element; sequence KLSKR. K260 serves as a coordination point for ATP.

Belongs to the class-I aminoacyl-tRNA synthetase family. Glutamate--tRNA ligase type 1 subfamily. In terms of assembly, monomer. The cofactor is Zn(2+).

It localises to the cytoplasm. It catalyses the reaction tRNA(Glu) + L-glutamate + ATP = L-glutamyl-tRNA(Glu) + AMP + diphosphate. Its function is as follows. Catalyzes the attachment of glutamate to tRNA(Glu) in a two-step reaction: glutamate is first activated by ATP to form Glu-AMP and then transferred to the acceptor end of tRNA(Glu). The sequence is that of Glutamate--tRNA ligase from Nocardioides sp. (strain ATCC BAA-499 / JS614).